The sequence spans 633 residues: Alpha-amylase (633 aa).

Catalysis depends on Glu123, which acts as the Nucleophile. The active-site Proton donor is Asp214.

Belongs to the glycosyl hydrolase 57 family.

The catalysed reaction is Endohydrolysis of (1-&gt;4)-alpha-D-glucosidic linkages in polysaccharides containing three or more (1-&gt;4)-alpha-linked D-glucose units.. This Pyrococcus horikoshii (strain ATCC 700860 / DSM 12428 / JCM 9974 / NBRC 100139 / OT-3) protein is Alpha-amylase (amyA).